A 365-amino-acid chain; its full sequence is Red-sensitive opsin (365 aa).

Residues 1-51 (MASQLNEAIFAARRRNDDDDTTRSSVFTYTNSNNTRGPFEGPNYHIAPRWV) are Extracellular-facing. Asn33 carries an N-linked (GlcNAc...) asparagine glycan. The chain crosses the membrane as a helical span at residues 52–76 (YNLTSIWMIFVVFASVFTNGLVIVA). The Cytoplasmic portion of the chain corresponds to 77–88 (TLKFKKLRHPLN). Residues 89-113 (WILVNMAIADLGETVIASTISVFNQ) form a helical membrane-spanning segment. At 114–128 (IFGYFILGHPMCVLE) the chain is on the extracellular side. An intrachain disulfide couples Cys125 to Cys202. The chain crosses the membrane as a helical span at residues 129–148 (GFTVSTCGITALWSLTVIAW). Over 149-167 (ERWFVVCKPFGNIKFDEKL) the chain is Cytoplasmic. Residues 168–191 (AATGIIFSWVWSAGWCAPPMFGWS) traverse the membrane as a helical segment. The Extracellular segment spans residues 192 to 217 (RFWPHGLKTSCGPDVFSGSSDPGVQS). Residues 218-245 (YMLVLMITCCIIPLAIIILCYLHVWWTI) form a helical membrane-spanning segment. Topologically, residues 246 to 267 (RQVAQQQKESESTQKAEREVSR) are cytoplasmic. The chain crosses the membrane as a helical span at residues 268 to 291 (MVVVMIVAYIFCWGPYTFFACFAA). Over 292–299 (FSPGYSFH) the chain is Extracellular. Residues 300-324 (PLAAALPAYFAKSATIYNPIIYVFM) traverse the membrane as a helical segment. Residue Lys311 is modified to N6-(retinylidene)lysine. Over 325–365 (NRQFRNCIYQMFGKKVDDGSEVSSTSRTEVSSVSNSSVSPA) the chain is Cytoplasmic. Residues 342–365 (DGSEVSSTSRTEVSSVSNSSVSPA) form a disordered region. A compositionally biased stretch (low complexity) spans 345–365 (EVSSTSRTEVSSVSNSSVSPA).

The protein belongs to the G-protein coupled receptor 1 family. Opsin subfamily. Post-translationally, phosphorylated on some or all of the serine and threonine residues present in the C-terminal region.

The protein localises to the membrane. Its function is as follows. Visual pigments are the light-absorbing molecules that mediate vision. They consist of an apoprotein, opsin, covalently linked to cis-retinal. This chain is Red-sensitive opsin (opn1lw1), found in Xenopus laevis (African clawed frog).